A 376-amino-acid chain; its full sequence is General transcription factor IIH subunit 2 (376 aa).

Residues 64–206 (HVMIVIDCSR…NIRCSAIGLS (143 aa)) form the VWFA domain. The segment at 286–303 (CTQCGARHCSIPAECPVC) adopts a C4-type zinc-finger fold.

This sequence belongs to the GTF2H2 family. Component of the 7-subunit TFIIH core complex composed of xpb-1, xpd-1, gtf-2H1, gtf-2H2C, gtf-2H3, Y73F8A.24 and gtf-2H5, which is active in NER. The core complex associates with the 3-subunit CDK-activating kinase (CAK) module composed of cyh-1, cdk-7 and mnat-1 to form the 10-subunit holoenzyme (holo-TFIIH) active in transcription.

It is found in the nucleus. Its function is as follows. Component of the general transcription and DNA repair factor IIH (TFIIH) core complex, which is involved in general and transcription-coupled nucleotide excision repair (NER) of damaged DNA and, when complexed to CAK, in RNA transcription by RNA polymerase II. In NER, TFIIH acts by opening DNA around the lesion to allow the excision of the damaged oligonucleotide and its replacement by a new DNA fragment. In transcription, TFIIH has an essential role in transcription initiation. When the pre-initiation complex (PIC) has been established, TFIIH is required for promoter opening and promoter escape. Phosphorylation of the C-terminal tail (CTD) of the largest subunit of RNA polymerase II by the kinase module CAK controls the initiation of transcription. The protein is General transcription factor IIH subunit 2 of Caenorhabditis elegans.